Here is a 409-residue protein sequence, read N- to C-terminus: Phosphatidylserine decarboxylase proenzyme, mitochondrial (409 aa).

The transit peptide at 1–52 (MATSVGHRCLGLLHGVAPWRSSLHPCEITALSQSLQPLRKLPFRAFRTDARK) directs the protein to the mitochondrion. A necessary for localization to both lipid droplets and mitochondria region spans residues 36–103 (QPLRKLPFRA…LGLEIPPKLA (68 aa)). Residues 53–63 (IHTAPARTMFL) lie on the Mitochondrial matrix side of the membrane. Residues 64-82 (LRPLPILLVTGGGYAGYRQ) form a helical membrane-spanning segment. Residues 83–409 (YEKYRERELE…IRFGEALGSL (327 aa)) are Mitochondrial intermembrane-facing. Residues Asp191, His267, and Ser378 each act as charge relay system; for autoendoproteolytic cleavage activity in the active site. The active-site Schiff-base intermediate with substrate; via pyruvic acid; for decarboxylase activity is Ser378. Ser378 carries the pyruvic acid (Ser); by autocatalysis modification.

This sequence belongs to the phosphatidylserine decarboxylase family. PSD-B subfamily. Eukaryotic type I sub-subfamily. In terms of assembly, heterodimer of a large membrane-associated beta subunit and a small pyruvoyl-containing alpha subunit. The cofactor is pyruvate. In terms of processing, is synthesized initially as an inactive proenzyme. Formation of the active enzyme involves a self-maturation process in which the active site pyruvoyl group is generated from an internal serine residue via an autocatalytic post-translational modification. Two non-identical subunits are generated from the proenzyme in this reaction, and the pyruvate is formed at the N-terminus of the alpha chain, which is derived from the carboxyl end of the proenzyme. The autoendoproteolytic cleavage occurs by a canonical serine protease mechanism, in which the side chain hydroxyl group of the serine supplies its oxygen atom to form the C-terminus of the beta chain, while the remainder of the serine residue undergoes an oxidative deamination to produce ammonia and the pyruvoyl prosthetic group on the alpha chain. During this reaction, the Ser that is part of the protease active site of the proenzyme becomes the pyruvoyl prosthetic group, which constitutes an essential element of the active site of the mature decarboxylase.

The protein resides in the mitochondrion inner membrane. The protein localises to the cytoplasm. Its subcellular location is the lipid droplet. The enzyme catalyses a 1,2-diacyl-sn-glycero-3-phospho-L-serine + H(+) = a 1,2-diacyl-sn-glycero-3-phosphoethanolamine + CO2. It functions in the pathway phospholipid metabolism; phosphatidylethanolamine biosynthesis. Catalyzes the formation of phosphatidylethanolamine (PtdEtn) from phosphatidylserine (PtdSer). Plays a central role in phospholipid metabolism and in the interorganelle trafficking of phosphatidylserine. May be involved in lipid droplet biogenesis at the endoplasmic reticulum membrane. The protein is Phosphatidylserine decarboxylase proenzyme, mitochondrial of Homo sapiens (Human).